Reading from the N-terminus, the 28-residue chain is Dermaseptin-6TR (28 aa).

As to expression, expressed by the skin glands.

The protein localises to the secreted. Has antimicrobial activity. This Phyllomedusa trinitatis (Trinidad leaf frog) protein is Dermaseptin-6TR.